Here is a 330-residue protein sequence, read N- to C-terminus: Polyprenal reductase (330 aa).

The Cytoplasmic segment spans residues 1–16 (MAGWAGFELSALNPLR). Residues 17 to 37 (TLWLALAAAFLFALLLQLAPA) form a helical membrane-spanning segment. The Lumenal portion of the chain corresponds to 38-80 (RLLPSCALFQDLLRYGKTKQSGSRRPAVCRAFDVPKRYFSHFY). The chain crosses the membrane as a helical span at residues 81 to 101 (VISVVWNGSLLWLLSQSLFLG). At 102 to 132 (APFPNWLSALLRTLGATQFQALEMESKASRM) the chain is on the cytoplasmic side. Residues 133–153 (PAAELALSAFLVLVFLWVHSL) form a helical membrane-spanning segment. The Lumenal portion of the chain corresponds to 154 to 169 (RRLFECFYVSVFSNAA). The chain crosses the membrane as a helical span at residues 170–190 (IHVVQYCFGLVYYVLVGLTVL). Topologically, residues 191–206 (SQVPMDDKNVYVLGKN) are cytoplasmic. The helical transmembrane segment at 207–227 (LLIQARWFHILGMVMFFWSSA) threads the bilayer. Over 228–277 (HQYKCHVILSNLRRNKKGVVIHCQHRIPFGDWFEYVSSANYLAELMIYIS) the chain is Lumenal. The chain crosses the membrane as a helical span at residues 278–298 (MAVTFGLHNLTWWLVVTYVFS). Residues 299 to 330 (SQALSAFFNHKFYRSTFVSYPKHRKAFLPFLF) are Cytoplasmic-facing.

The protein belongs to the steroid 5-alpha reductase family. Polyprenal reductase subfamily.

Its subcellular location is the endoplasmic reticulum membrane. The enzyme catalyses a di-trans,poly-cis-dolichal + NADP(+) = a di-trans,poly-cis-polyprenal + NADPH + H(+). It catalyses the reaction a 3-oxo-5alpha-steroid + NADP(+) = a 3-oxo-Delta(4)-steroid + NADPH + H(+). It carries out the reaction androst-4-ene-3,17-dione + NADPH + H(+) = 5alpha-androstan-3,17-dione + NADP(+). The catalysed reaction is 17beta-hydroxy-5alpha-androstan-3-one + NADP(+) = testosterone + NADPH + H(+). It participates in protein modification; protein glycosylation. Functionally, plays a key role in early steps of protein N-linked glycosylation by being involved in the conversion of polyprenol into dolichol. Acts as a polyprenal reductase that mediates the reduction of polyprenal into dolichal in a NADP-dependent mechanism. Dolichols are required for the synthesis of dolichol-linked monosaccharides and the oligosaccharide precursor used for N-glycosylation. Also able to convert testosterone (T) into 5-alpha-dihydrotestosterone (DHT). In Mus musculus (Mouse), this protein is Polyprenal reductase.